The primary structure comprises 313 residues: Aspartate carbamoyltransferase catalytic subunit (313 aa).

Positions 66 and 67 each coordinate carbamoyl phosphate. Lys94 contacts L-aspartate. Residues Arg116, His144, and Gln147 each coordinate carbamoyl phosphate. Arg177 and Arg231 together coordinate L-aspartate. 2 residues coordinate carbamoyl phosphate: Gly272 and Pro273.

It belongs to the aspartate/ornithine carbamoyltransferase superfamily. ATCase family. In terms of assembly, heterododecamer (2C3:3R2) of six catalytic PyrB chains organized as two trimers (C3), and six regulatory PyrI chains organized as three dimers (R2).

It catalyses the reaction carbamoyl phosphate + L-aspartate = N-carbamoyl-L-aspartate + phosphate + H(+). It participates in pyrimidine metabolism; UMP biosynthesis via de novo pathway; (S)-dihydroorotate from bicarbonate: step 2/3. In terms of biological role, catalyzes the condensation of carbamoyl phosphate and aspartate to form carbamoyl aspartate and inorganic phosphate, the committed step in the de novo pyrimidine nucleotide biosynthesis pathway. The polypeptide is Aspartate carbamoyltransferase catalytic subunit (Pelagibacter ubique (strain HTCC1062)).